We begin with the raw amino-acid sequence, 359 residues long: Peptide chain release factor 1 (359 aa).

Gln236 is subject to N5-methylglutamine.

This sequence belongs to the prokaryotic/mitochondrial release factor family. In terms of processing, methylated by PrmC. Methylation increases the termination efficiency of RF1.

The protein localises to the cytoplasm. Its function is as follows. Peptide chain release factor 1 directs the termination of translation in response to the peptide chain termination codons UAG and UAA. This Streptococcus thermophilus (strain ATCC BAA-250 / LMG 18311) protein is Peptide chain release factor 1.